A 341-amino-acid polypeptide reads, in one-letter code: S-adenosylmethionine:tRNA ribosyltransferase-isomerase (341 aa).

Belongs to the QueA family. As to quaternary structure, monomer.

Its subcellular location is the cytoplasm. It catalyses the reaction 7-aminomethyl-7-carbaguanosine(34) in tRNA + S-adenosyl-L-methionine = epoxyqueuosine(34) in tRNA + adenine + L-methionine + 2 H(+). The protein operates within tRNA modification; tRNA-queuosine biosynthesis. In terms of biological role, transfers and isomerizes the ribose moiety from AdoMet to the 7-aminomethyl group of 7-deazaguanine (preQ1-tRNA) to give epoxyqueuosine (oQ-tRNA). The chain is S-adenosylmethionine:tRNA ribosyltransferase-isomerase from Staphylococcus aureus (strain USA300).